Reading from the N-terminus, the 141-residue chain is MGAGILRVIIMDSENYVETHPSDDNEAMKTSDVYKVDKNLPKRFNNPDCFQGYSTKINHPFYQTSSQIYGSKRPTVHEMPTTFNGSYRKFSEHMLKSGMFRDNGFNTSIEKSKITGHDTIPMFQDRINFNYAYDSGNGPKN.

The protein belongs to the PIERCE1 family.

Its subcellular location is the cytoplasm. It is found in the cytoskeleton. The protein localises to the cilium axoneme. Its function is as follows. Microtubule inner protein involved in the attachment of outer dynein arms (ODAs) to dynein-decorated doublet microtubules (DMTs) in cilia axoneme, which is required for motile cilia beating. Functions at the initial step of left-right asymmetry specification of the visceral organs. This Salmo salar (Atlantic salmon) protein is Piercer of microtubule wall 1 protein (pierce1).